A 595-amino-acid chain; its full sequence is Sucrose transport protein SUT4 (595 aa).

Residues 1–61 (MDSAAGGGGL…PAARTTTTRK (61 aa)) lie on the Cytoplasmic side of the membrane. The tract at residues 29 to 55 (SLNGGTPRGGSPKDPDATHQQGPPAAR) is disordered. A helical transmembrane segment spans residues 62 to 82 (LVLACMVAAGVQFGWALQLSL). Residues 83–97 (LTPYIQTLGIDHAMA) lie on the Extracellular side of the membrane. Residues 98–118 (SFIWLCGPITGFVVQPCVGVW) traverse the membrane as a helical segment. The Cytoplasmic portion of the chain corresponds to 119 to 130 (SDKCRSKYGRRR). Residues 131 to 151 (PFILAGCLMICFAVTLIGFSA) traverse the membrane as a helical segment. Over 152–173 (DLGYILGDTTEHCSTYKGSRFR) the chain is Extracellular. Residues 174 to 194 (AAIIFVLGFWMLDLANNTVQG) traverse the membrane as a helical segment. Residues 195–213 (PARALLADLSGPDQCNSAN) lie on the Cytoplasmic side of the membrane. The helical transmembrane segment at 214 to 234 (AIFCTWMAVGNVLGFSSGASG) threads the bilayer. The Extracellular segment spans residues 235–256 (NWHKWFPFLMTRACCEACSNLK). Residues 257-277 (AAFLVAVVFLLFCMSVTLYFA) traverse the membrane as a helical segment. Over 278–365 (EEIPLEPTDA…LTSMRHLPPG (88 aa)) the chain is Cytoplasmic. The interval 291–340 (SDSAPLLNGSRDDNNASNEPRNGALPNGHTDGSNVPANSNAEDSNSNREN) is disordered. Positions 320 to 334 (TDGSNVPANSNAEDS) are enriched in polar residues. The chain crosses the membrane as a helical span at residues 366–386 (MYSVLLVMALTWLSWFPFFLF). Topologically, residues 387–417 (DTDWMGREVYHGDPNGNLSERKAYDNGVREG) are extracellular. N-linked (GlcNAc...) asparagine glycosylation occurs at asparagine 403. A helical membrane pass occupies residues 418-438 (AFGLLLNSVVLGIGSFLVDPL). Topologically, residues 439-447 (CRLMGARLV) are cytoplasmic. The chain crosses the membrane as a helical span at residues 448-468 (WAISNFTVFICMLATAILSWI). The Extracellular portion of the chain corresponds to 469 to 491 (SFDLYSSKLHHIIGANKTVKNSA). N-linked (GlcNAc...) asparagine glycosylation is present at asparagine 484. The chain crosses the membrane as a helical span at residues 492 to 512 (LIVFSLLGLPLSITYSVPFSV). The Cytoplasmic portion of the chain corresponds to 513 to 525 (TAELTAGTGGGQG). The helical transmembrane segment at 526–546 (LATGVLNLAIVVPQIVVSLGA) threads the bilayer. The Extracellular segment spans residues 547–556 (GPWDALFGGG). Residues 557–577 (NVPAFALASVFSLGAGVLAVL) form a helical membrane-spanning segment. Residues 578–595 (KLPKLPNSYRSAGFHGFG) are Cytoplasmic-facing.

It belongs to the glycoside-pentoside-hexuronide (GPH) cation symporter transporter (TC 2.A.2.4) family. Homodimer.

The protein resides in the cell membrane. Its pathway is glycan biosynthesis; sucrose metabolism. Its function is as follows. Responsible for the transport of sucrose into the cell, with the concomitant uptake of protons (symport system). May also transport other glucosides. This Oryza sativa subsp. indica (Rice) protein is Sucrose transport protein SUT4 (SUT4).